The following is a 249-amino-acid chain: Diaminopimelate epimerase (249 aa).

Positions 11 and 60 each coordinate substrate. Residue Cys-69 is the Proton donor of the active site. Substrate-binding positions include 70–71 (GN), Asn-164, and 182–183 (ER). The active-site Proton acceptor is Cys-192. 193–194 (GT) is a binding site for substrate.

The protein belongs to the diaminopimelate epimerase family. Homodimer.

Its subcellular location is the cytoplasm. It catalyses the reaction (2S,6S)-2,6-diaminopimelate = meso-2,6-diaminopimelate. It participates in amino-acid biosynthesis; L-lysine biosynthesis via DAP pathway; DL-2,6-diaminopimelate from LL-2,6-diaminopimelate: step 1/1. Functionally, catalyzes the stereoinversion of LL-2,6-diaminopimelate (L,L-DAP) to meso-diaminopimelate (meso-DAP), a precursor of L-lysine and an essential component of the bacterial peptidoglycan. The chain is Diaminopimelate epimerase from Campylobacter jejuni subsp. jejuni serotype O:6 (strain 81116 / NCTC 11828).